Reading from the N-terminus, the 622-residue chain is Leucine-rich repeat and immunoglobulin-like domain-containing nogo receptor-interacting protein 1-B (622 aa).

A signal peptide spans 1-43 (MTFLQVTIKMVAREASGHSYLVACWQPILILMLGTVLSGSATG). Disulfide bonds link Cys44-Cys50 and Cys48-Cys59. The LRRNT domain occupies 44–73 (CPSRCECSAQERSVVCHRRKLITLPEGIPI). Residues 44 to 563 (CPSRCECSAQ…FDMKTLIIAT (520 aa)) lie on the Extracellular side of the membrane. LRR repeat units lie at residues 74 to 95 (DTRLLDLSKNRLKAINPEEFLN), 98 to 119 (QLEDLQLNENIISVIEPGAFSN), 122 to 143 (GLRTLGLRNNNLKLIQLGVFTG), 146 to 167 (NLTRLDISENKIVILLDYMFQE), 170 to 191 (NLKELEVGDNDLVFISHRAFHG), 194 to 215 (SLEQLTMERCNLTSVPTEAFSH), 218 to 239 (NLLTLKLRHLNVNVIRDFSFRR), 266 to 287 (NITTLSITNCNLTAVPYVAIQH), 290 to 311 (YLRFFNLSFNPIEVVEGNKMHN), 314 to 335 (RLQAFHLVGGRLVSIEPYSFKG), and 338 to 359 (YLRVLNVSSNSLSTLEESAFHS). Asn146 is a glycosylation site (N-linked (GlcNAc...) asparagine). Asn204 is a glycosylation site (N-linked (GlcNAc...) asparagine). Asn266, Asn276, and Asn295 each carry an N-linked (GlcNAc...) asparagine glycan. N-linked (GlcNAc...) asparagine glycosylation occurs at Asn343. The LRRCT domain maps to 371 to 425 (NPLACDCRLLWVFRRRWRLNFNRQQPSCETPEFLQGKEFKDFPDVLPPNYFTCQK). Cystine bridges form between Cys375–Cys398, Cys377–Cys423, and Cys448–Cys499. An Ig-like C2-type domain is found at 413-515 (PDVLPPNYFT…GNDTRLAHLH (103 aa)). Residues Asn494, Asn507, Asn528, and Asn544 are each glycosylated (N-linked (GlcNAc...) asparagine). The chain crosses the membrane as a helical span at residues 564–584 (TMGFISFLGVVLFCLVLLFLW). Residues 585-622 (SRGKGNAKPNIEIEYVPRKVDGENSPNEGSHKISMKMI) are Cytoplasmic-facing.

The protein localises to the cell membrane. In terms of biological role, may play a role in regulating axonal regeneration and plasticity in the adult central nervous system. This Danio rerio (Zebrafish) protein is Leucine-rich repeat and immunoglobulin-like domain-containing nogo receptor-interacting protein 1-B (lingo1b).